Consider the following 366-residue polypeptide: Histidinol-phosphate aminotransferase (366 aa).

N6-(pyridoxal phosphate)lysine is present on Lys228.

It belongs to the class-II pyridoxal-phosphate-dependent aminotransferase family. Histidinol-phosphate aminotransferase subfamily. In terms of assembly, homodimer. The cofactor is pyridoxal 5'-phosphate.

It catalyses the reaction L-histidinol phosphate + 2-oxoglutarate = 3-(imidazol-4-yl)-2-oxopropyl phosphate + L-glutamate. It participates in amino-acid biosynthesis; L-histidine biosynthesis; L-histidine from 5-phospho-alpha-D-ribose 1-diphosphate: step 7/9. This is Histidinol-phosphate aminotransferase from Stutzerimonas stutzeri (Pseudomonas stutzeri).